The chain runs to 117 residues: Large ribosomal subunit protein bL19 (117 aa).

It belongs to the bacterial ribosomal protein bL19 family.

Its function is as follows. This protein is located at the 30S-50S ribosomal subunit interface and may play a role in the structure and function of the aminoacyl-tRNA binding site. The protein is Large ribosomal subunit protein bL19 of Vibrio cholerae serotype O1 (strain ATCC 39541 / Classical Ogawa 395 / O395).